The chain runs to 347 residues: DNA-directed RNA polymerase subunit alpha (347 aa).

The interval methionine 1 to aspartate 243 is alpha N-terminal domain (alpha-NTD). Residues serine 255–alanine 347 are alpha C-terminal domain (alpha-CTD).

Belongs to the RNA polymerase alpha chain family. In terms of assembly, homodimer. The RNAP catalytic core consists of 2 alpha, 1 beta, 1 beta' and 1 omega subunit. When a sigma factor is associated with the core the holoenzyme is formed, which can initiate transcription.

It catalyses the reaction RNA(n) + a ribonucleoside 5'-triphosphate = RNA(n+1) + diphosphate. DNA-dependent RNA polymerase catalyzes the transcription of DNA into RNA using the four ribonucleoside triphosphates as substrates. The polypeptide is DNA-directed RNA polymerase subunit alpha (Lawsonia intracellularis (strain PHE/MN1-00)).